Here is a 217-residue protein sequence, read N- to C-terminus: Large ribosomal subunit protein uL3 (217 aa).

Residues 137–160 are disordered; it reads VSASHGSHRNHRKPGSIGASSTPS.

This sequence belongs to the universal ribosomal protein uL3 family. As to quaternary structure, part of the 50S ribosomal subunit. Forms a cluster with proteins L14 and L19.

Its function is as follows. One of the primary rRNA binding proteins, it binds directly near the 3'-end of the 23S rRNA, where it nucleates assembly of the 50S subunit. The polypeptide is Large ribosomal subunit protein uL3 (Clavibacter sepedonicus (Clavibacter michiganensis subsp. sepedonicus)).